Reading from the N-terminus, the 392-residue chain is Putative pectate lyase 21 (392 aa).

Positions 1–21 (MSIVCTFFLFLLNTSFAFAFA) are cleaved as a signal peptide. N-linked (GlcNAc...) asparagine glycosylation occurs at N38. Ca(2+) is bound by residues D189, D213, and D217. Residue N220 is glycosylated (N-linked (GlcNAc...) asparagine). Residue R269 is part of the active site.

The protein belongs to the polysaccharide lyase 1 family. Ca(2+) is required as a cofactor.

It carries out the reaction Eliminative cleavage of (1-&gt;4)-alpha-D-galacturonan to give oligosaccharides with 4-deoxy-alpha-D-galact-4-enuronosyl groups at their non-reducing ends.. Its pathway is glycan metabolism; pectin degradation; 2-dehydro-3-deoxy-D-gluconate from pectin: step 2/5. The polypeptide is Putative pectate lyase 21 (Arabidopsis thaliana (Mouse-ear cress)).